We begin with the raw amino-acid sequence, 423 residues long: Innexin eat-5 (423 aa).

The next 4 helical transmembrane spans lie at 25–41 (YYYS…TITA), 102–122 (PFIM…WSML), 277–297 (IFLF…FDSI), and 341–361 (HSIL…IILL).

The protein belongs to the pannexin family. As to quaternary structure, heterooligomer of eat-5 and another innexin. As to expression, expressed in pharyngeal muscles.

It is found in the cell membrane. The protein localises to the cell junction. It localises to the gap junction. In terms of biological role, structural component of the gap junctions. Required for synchronized pharyngeal muscle contractions. The polypeptide is Innexin eat-5 (eat-5) (Caenorhabditis elegans).